We begin with the raw amino-acid sequence, 395 residues long: Phosphoglycerate kinase (395 aa).

Substrate-binding positions include 22-24 (DFN), Arg-38, 61-64 (HLGR), Arg-119, and Arg-152. Residues Lys-203, Gly-294, Glu-325, and 351–354 (GGDT) each bind ATP.

Belongs to the phosphoglycerate kinase family. As to quaternary structure, monomer.

Its subcellular location is the cytoplasm. It catalyses the reaction (2R)-3-phosphoglycerate + ATP = (2R)-3-phospho-glyceroyl phosphate + ADP. It participates in carbohydrate degradation; glycolysis; pyruvate from D-glyceraldehyde 3-phosphate: step 2/5. The protein is Phosphoglycerate kinase of Hydrogenobaculum sp. (strain Y04AAS1).